The primary structure comprises 239 residues: Probable replication-associated protein repA2 (239 aa).

Belongs to the IncFII RepA family.

In terms of biological role, this protein is essential for plasmid replication; it is involved in copy control functions. The sequence is that of Probable replication-associated protein repA2 (repA2) from Buchnera aphidicola subsp. Baizongia pistaciae (strain Bp).